A 1308-amino-acid chain; its full sequence is MQCLAAALKDETNMSGGGEQADILPANYVVKDRWKVLKKIGGGGFGEIYEAMDLLTRENVALKVESAQQPKQVLKMEVAVLKKLQGKDHVCRFIGCGRNEKFNYVVMQLQGRNLADLRRSQPRGTFTLSTTLRLGKQILESIEAIHSVGFLHRDIKPSNFAMGRLPSTYRKCYMLDFGLARQYTNTTGDVRPPRNVAGFRGTVRYASVNAHKNREMGRHDDLWSLFYMLVEFAVGQLPWRKIKDKEQVGMIKEKYEHRMLLKHMPSEFHLFLDHIASLDYFTKPDYQLIMSVFENSMKERGIAENEAFDWEKAGTDALLSTSTSTPPQQNTRQTAAMFGVVNVTPVPGDLLRENTEDVLQGEHLSDQENAPPILPGRPPEGLGPGPHLVPHPGGPEAEVWEETDVNRNKLRINIGKTPCVEEEQSRGVGVPSSPVRAPPDSPTTPVRSLCYRRVNSPESERLSTAADGRVELQERRSRMDLPGSPSRQACSSQPAQMLSVDTGHADRQASGRMDVSASVEQEALSNAFRSVPLAEEEDFDSKEWVIIDKETELKDFPPGAEPSTSGTTDEEPEELRPLPEEGEERRRLGTEPTVRPRGRGMHTLTEEDPRQMLPQPAPPQLSQADGRSETSQPPTPGSPSHSPLHSGPRPRRRESDPTGPQRQVFSVAPPFEVNGLPRAVPLALPYQDFKRDLSDYRERARLLNRVRRVGFSHMLLTAPQVPLAPFQPQANGKEGEEEEEEEEEEEEEEEEEEEEEEEEEEEEEEEEEAGALGEVLGPRSGSSSEGSERSTERSQEGAPSTLLADDQKEARGRASMADGDLEPEEGSKTLVLVSPGDMKKSPVTAELAPDPDLGTLAALTPQHERPQPTGSQLDVSEPGTLSSILKSEPKPSGPGAGGGVGLVAPGAGVTAVTSPFTKVERTFVHIAEKSHLNVMSSGGQASRPEELSTGGELGLEVLSEGGIAEEGAPAPLENGMALAGLDGTEMESCALSGPPGETPSEVVTDSLPNGPALADGPAPASQQEPVTKKGTTISPSRHAMPGSRPRSRIPVLLSEEDTGSEPSGSLSAKERWSKRARPQQDLARLVMEKRQGRLLLRLASGASSSSSEEQRRASETLSGTGSEEDTPASEPTTALPRKAVRAATTRSRIPRPISVSMPVEGQQLPGRPHGAASATDLAITSRLQLQKPSGLAPAADLRPKQSASRGPGPGRAQVSKPAAPRSPGLPASTARHPSGSPRSQSLSRKESSSPSHQARPGVPPSRGVLQVRSQPEASPVAPKKGPKGKQLQTQRAATKGRAVVSEGRPGAR.

Positions 34-297 (WKVLKKIGGG…LIMSVFENSM (264 aa)) constitute a Protein kinase domain. Residues 40-48 (IGGGGFGEI) and lysine 63 each bind ATP. Aspartate 154 functions as the Proton acceptor in the catalytic mechanism. Disordered regions lie at residues 364 to 397 (LSDQENAPPILPGRPPEGLGPGPHLVPHPGGPEA), 418 to 448 (PCVEEEQSRGVGVPSSPVRAPPDSPTTPVRS), 474 to 671 (ERRS…APPF), 720 to 899 (QVPL…AGGG), 985 to 1085 (EMES…LARL), and 1097 to 1308 (RLAS…PGAR). The residue at position 441 (serine 441) is a Phosphoserine. Over residues 485–496 (PSRQACSSQPAQ) the composition is skewed to polar residues. Serine 541 is modified (phosphoserine). Basic and acidic residues-rich tracts occupy residues 541-555 (SKEWVIIDKETELKD) and 574-589 (ELRPLPEEGEERRRLG). Residues 638-647 (SPSHSPLHSG) are compositionally biased toward low complexity. The segment covering 735–769 (GEEEEEEEEEEEEEEEEEEEEEEEEEEEEEEEEEA) has biased composition (acidic residues). The span at 786-795 (GSERSTERSQ) shows a compositional bias: basic and acidic residues. Composition is skewed to polar residues over residues 868-885 (PTGSQLDVSEPGTLSSIL) and 1020-1035 (ASQQEPVTKKGTTISP). Positions 1097–1107 (RLASGASSSSS) are enriched in low complexity.

The protein belongs to the protein kinase superfamily. CK1 Ser/Thr protein kinase family. Mg(2+) is required as a cofactor. The cofactor is Mn(2+). Expressed in the brain. Strong expression in the cortical layers, the CA1 layers of the hippocampus and the granular layer of the cerebellum. Also expressed in the large cortical pyramidal cells in the temporal cortex, the CA1 pyramidal neurons and the cerebellum granular neurons.

It is found in the cytoplasm. The enzyme catalyses L-seryl-[protein] + ATP = O-phospho-L-seryl-[protein] + ADP + H(+). The catalysed reaction is L-threonyl-[protein] + ATP = O-phospho-L-threonyl-[protein] + ADP + H(+). Its function is as follows. Serine/threonine kinase which is able to phosphorylate TAU on serine, threonine and tyrosine residues. Induces aggregation of TAU. In Mus musculus (Mouse), this protein is Tau-tubulin kinase 1 (Ttbk1).